A 135-amino-acid polypeptide reads, in one-letter code: Large ribosomal subunit protein eL32 (135 aa).

Belongs to the eukaryotic ribosomal protein eL32 family.

This chain is Large ribosomal subunit protein eL32 (rpl32e), found in Methanococcus vannielii.